Consider the following 268-residue polypeptide: Norsolorinic acid ketoreductase nor1 (268 aa).

NADP(+) contacts are provided by Ile32, Asp79, Asn108, Tyr182, Lys186, Val213, and Thr215. The Proton donor role is filled by Tyr182. Residue Lys186 is the Lowers pKa of active site Tyr of the active site.

The protein belongs to the short-chain dehydrogenases/reductases (SDR) family.

It is found in the cytoplasm. Its subcellular location is the cytosol. The protein localises to the vacuole. The catalysed reaction is (1'S)-averantin + NADP(+) = norsolorinic acid + NADPH + H(+). It functions in the pathway mycotoxin biosynthesis. Norsolorinic acid ketoreductase; part of the fragmented gene cluster that mediates the biosynthesis of dothistromin (DOTH), a polyketide toxin very similar in structure to the aflatoxin precursor, versicolorin B. The first step of the pathway is the conversion of acetate to norsolorinic acid (NOR) and requires the fatty acid synthase subunits hexA and hexB, as well as the polyketide synthase pksA. PksA combines a hexanoyl starter unit and 7 malonyl-CoA extender units to synthesize the precursor NOR. The hexanoyl starter unit is provided to the acyl-carrier protein (ACP) domain by the fungal fatty acid synthase hexA/hexB. The second step is the conversion of NOR to averantin (AVN) and requires the norsolorinic acid ketoreductase nor1, which catalyzes the dehydration of norsolorinic acid to form (1'S)-averantin. The cytochrome P450 monooxygenase avnA then catalyzes the hydroxylation of AVN to 5'hydroxyaverantin (HAVN). The next step is performed by adhA that transforms HAVN to averufin (AVF). Averufin might then be converted to hydroxyversicolorone by cypX and avfA. Hydroxyversicolorone is further converted versiconal hemiacetal acetate (VHA) by moxY. VHA is then the substrate for the versiconal hemiacetal acetate esterase est1 to yield versiconal (VAL). Versicolorin B synthase vbsA then converts VAL to versicolorin B (VERB) by closing the bisfuran ring. Then, the activity of the versicolorin B desaturase verB leads to versicolorin A (VERA). DotB, a predicted chloroperoxidase, may perform epoxidation of the A-ring of VERA. Alternatively, a cytochrome P450, such as cypX or avnA could catalyze this step. It is also possible that another, uncharacterized, cytochrome P450 enzyme is responsible for this step. Opening of the epoxide could potentially be achieved by the epoxide hydrolase epoA. However, epoA seems not to be required for DOTH biosynthesis, but other epoxide hydrolases may have the ability to complement this hydrolysis. Alternatively, opening of the epoxide ring could be achieved non-enzymatically. The next step is the deoxygenation of ring A to yield the 5,8-dihydroxyanthraquinone which is most likely catalyzed by the NADPH dehydrogenase encoded by ver1. The last stages of DOTH biosynthesis are proposed to involve hydroxylation of the bisfuran. OrdB and norB might have oxidative roles here. An alternative possibility is that cytochrome P450 monoogenases such as avnA and cypX might perform these steps in addition to previously proposed steps. The sequence is that of Norsolorinic acid ketoreductase nor1 from Dothistroma septosporum (strain NZE10 / CBS 128990) (Red band needle blight fungus).